The following is a 471-amino-acid chain: Secretogranin-3 (471 aa).

Positions 1 to 22 (MGFLWTGTWIVVLMLHSSPIQA) are cleaved as a signal peptide. Disordered regions lie at residues 23–72 (FPKP…ESNY) and 86–105 (EKEKNEKERQSVKISPNDNK). The span at 32-45 (KPLHNRELSAERPL) shows a compositional bias: basic and acidic residues. A Phosphoserine modification is found at Ser-40. O-linked (Xyl...) (chondroitin sulfate) serine glycosylation occurs at Ser-40. N-linked (GlcNAc...) asparagine glycosylation occurs at Asn-71. A compositionally biased stretch (basic and acidic residues) spans 86–96 (EKEKNEKERQS). Asn-353 is a glycosylation site (N-linked (GlcNAc...) asparagine). Positions 357–409 (LFAVPSEKSHEETDSTKEEAAKMEKEYGTLKDSTKDDDSNPRGKTDEHKGKTE) are disordered. Residues 363 to 409 (EKSHEETDSTKEEAAKMEKEYGTLKDSTKDDDSNPRGKTDEHKGKTE) are compositionally biased toward basic and acidic residues. Phosphoserine is present on Ser-365.

In terms of assembly, interacts with CHGA. Interacts with secretogranin II/SCG2. Interacts (via C-terminus) with CPE.

It is found in the cytoplasmic vesicle. The protein resides in the secretory vesicle. The protein localises to the secretory vesicle membrane. Its subcellular location is the secreted. Its function is as follows. Member of the granin protein family that regulates the biogenesis of secretory granules. Acts as a sorting receptor for intragranular proteins including chromogranin A/CHGA. May also play a role in angiogenesis. Promotes endothelial proliferation, migration and tube formation through MEK/ERK signaling pathway. In Bos taurus (Bovine), this protein is Secretogranin-3 (SCG3).